Here is a 186-residue protein sequence, read N- to C-terminus: MTASSNFTNQFLIAMPGLEDPNFFHSVTYICEHNEQGAMGIVINQPTDLTLKTVLEHMDIESDAKAAEIPVFHGGPVQTDRGFVLHSPAGAWSSSMPVSEGVQVTTSRDILEAMARHEGPKDVLVALGYAGWGAGQLEQEIADNAWLTTPADLDILFRLPPDQRWQAAAARLGVDLSLISGDAGHA.

It belongs to the UPF0301 (AlgH) family.

The chain is UPF0301 protein Tgr7_2910 from Thioalkalivibrio sulfidiphilus (strain HL-EbGR7).